The sequence spans 788 residues: Putative wall-associated receptor kinase-like 11 (788 aa).

An N-terminal signal peptide occupies residues 1-27; it reads MRCDNNYSFSILFSLLLILILDSKVVS. The Extracellular segment spans residues 28-375; that stretch reads LSTSCQSKSV…TFNCIGNKTR (348 aa). N-linked (GlcNAc...) asparagine glycosylation is found at asparagine 65, asparagine 80, asparagine 121, asparagine 159, asparagine 233, asparagine 253, asparagine 278, asparagine 295, and asparagine 310. An atypical EGF-like region spans residues 306 to 369; that stretch reads CICNNVTISG…CVNLPGTFNC (64 aa). 3 cysteine pairs are disulfide-bonded: cysteine 308–cysteine 321, cysteine 343–cysteine 360, and cysteine 354–cysteine 369. Asparagine 372 carries an N-linked (GlcNAc...) asparagine glycan. A helical transmembrane segment spans residues 376–396; the sequence is VTMIGVGSAFGILVLVVGIWW. Over 397 to 788 the chain is Cytoplasmic; it reads LRKFLKKRRM…QPLFPHPTWI (392 aa). Residues 451 to 726 enclose the Protein kinase domain; the sequence is FSESRILGQG…KVFTDLEKIL (276 aa). Residues 457–465 and lysine 479 contribute to the ATP site; that span reads LGQGGQGTV. A Phosphotyrosine modification is found at tyrosine 524. Aspartate 576 acts as the Proton acceptor in catalysis. Threonine 610 and threonine 615 each carry phosphothreonine. Position 623 is a phosphotyrosine (tyrosine 623).

This sequence belongs to the protein kinase superfamily. Ser/Thr protein kinase family.

Its subcellular location is the membrane. It carries out the reaction L-seryl-[protein] + ATP = O-phospho-L-seryl-[protein] + ADP + H(+). The enzyme catalyses L-threonyl-[protein] + ATP = O-phospho-L-threonyl-[protein] + ADP + H(+). Functionally, putative serine/threonine-protein kinase that may function as a signaling receptor of extracellular matrix component. This Arabidopsis thaliana (Mouse-ear cress) protein is Putative wall-associated receptor kinase-like 11 (WAKL11).